The sequence spans 157 residues: Large ribosomal subunit protein uL15 (157 aa).

This sequence belongs to the universal ribosomal protein uL15 family. As to quaternary structure, part of the 50S ribosomal subunit.

Binds to the 23S rRNA. The protein is Large ribosomal subunit protein uL15 of Ehrlichia ruminantium (strain Gardel).